A 501-amino-acid chain; its full sequence is Lysine--tRNA ligase (501 aa).

2 residues coordinate Mg(2+): Glu411 and Glu418.

The protein belongs to the class-II aminoacyl-tRNA synthetase family. As to quaternary structure, homodimer. The cofactor is Mg(2+).

It is found in the cytoplasm. The catalysed reaction is tRNA(Lys) + L-lysine + ATP = L-lysyl-tRNA(Lys) + AMP + diphosphate. The chain is Lysine--tRNA ligase from Magnetococcus marinus (strain ATCC BAA-1437 / JCM 17883 / MC-1).